The sequence spans 291 residues: Taste receptor type 2 member 16 (291 aa).

A topological domain (extracellular) is located at residue methionine 1. A helical transmembrane segment spans residues isoleucine 2–isoleucine 22. The Cytoplasmic segment spans residues valine 23 to arginine 41. A helical membrane pass occupies residues leucine 42–alanine 62. Residues serine 63–threonine 84 lie on the Extracellular side of the membrane. A glycan (N-linked (GlcNAc...) asparagine) is linked at asparagine 80. The helical transmembrane segment at tryptophan 85 to isoleucine 105 threads the bilayer. The Cytoplasmic portion of the chain corresponds to lysine 106 to leucine 125. Residues phenylalanine 126–isoleucine 146 traverse the membrane as a helical segment. Residues glycine 147 to threonine 182 are Extracellular-facing. Asparagine 163 is a glycosylation site (N-linked (GlcNAc...) asparagine). Residues valine 183–leucine 203 form a helical membrane-spanning segment. Over threonine 204 to serine 228 the chain is Cytoplasmic. A helical transmembrane segment spans residues leucine 229–glycine 249. At threonine 250–tryptophan 257 the chain is on the extracellular side. A helical transmembrane segment spans residues leucine 258 to leucine 278. The Cytoplasmic segment spans residues serine 279 to cysteine 291.

The protein belongs to the G-protein coupled receptor T2R family. In terms of assembly, interacts with RTP3 and RTP4.

The protein resides in the cell membrane. Functionally, receptor that may play a role in the perception of bitterness and is gustducin-linked. May play a role in sensing the chemical composition of the gastrointestinal content. The activity of this receptor may stimulate alpha gustducin, mediate PLC-beta-2 activation and lead to the gating of TRPM5. The polypeptide is Taste receptor type 2 member 16 (TAS2R16) (Pan troglodytes (Chimpanzee)).